The sequence spans 839 residues: Probable alpha-glucuronidase A (839 aa).

An N-terminal signal peptide occupies residues 1-18 (MRWSFLTVLLWLVSLTGA). 12 N-linked (GlcNAc...) asparagine glycosylation sites follow: Asn49, Asn101, Asn148, Asn221, Asn278, Asn309, Asn342, Asn464, Asn526, Asn575, Asn681, and Asn731.

The protein belongs to the glycosyl hydrolase 67 family.

Its subcellular location is the secreted. The catalysed reaction is an alpha-D-glucuronoside + H2O = D-glucuronate + an alcohol. Functionally, alpha-glucuronidase involved in the hydrolysis of xylan, a major structural heterogeneous polysaccharide found in plant biomass representing the second most abundant polysaccharide in the biosphere, after cellulose. Releases 4-O-methylglucuronic acid from xylan. The polypeptide is Probable alpha-glucuronidase A (aguA) (Aspergillus flavus (strain ATCC 200026 / FGSC A1120 / IAM 13836 / NRRL 3357 / JCM 12722 / SRRC 167)).